We begin with the raw amino-acid sequence, 560 residues long: Arginine--tRNA ligase (560 aa).

The short motif at 121 to 131 (PNIAKPFSMGH) is the 'HIGH' region element.

Belongs to the class-I aminoacyl-tRNA synthetase family. In terms of assembly, monomer.

It is found in the cytoplasm. It catalyses the reaction tRNA(Arg) + L-arginine + ATP = L-arginyl-tRNA(Arg) + AMP + diphosphate. The chain is Arginine--tRNA ligase from Exiguobacterium sp. (strain ATCC BAA-1283 / AT1b).